The sequence spans 55 residues: Large ribosomal subunit protein bL33 (55 aa).

Belongs to the bacterial ribosomal protein bL33 family.

This Orientia tsutsugamushi (strain Boryong) (Rickettsia tsutsugamushi) protein is Large ribosomal subunit protein bL33.